Consider the following 261-residue polypeptide: Taurine import ATP-binding protein TauB (261 aa).

Residues 4–233 form the ABC transporter domain; it reads LQLERIGAQY…RYAAGESARA (230 aa). 38 to 45 is a binding site for ATP; the sequence is GPSGSGKT.

This sequence belongs to the ABC transporter superfamily. Taurine importer (TC 3.A.1.17.1) family. In terms of assembly, the complex is composed of two ATP-binding proteins (TauB), two transmembrane proteins (TauC) and a solute-binding protein (TauA).

The protein resides in the cell inner membrane. The enzyme catalyses taurine(out) + ATP + H2O = taurine(in) + ADP + phosphate + H(+). Its function is as follows. Part of the ABC transporter complex TauABC involved in taurine import. Responsible for energy coupling to the transport system. The protein is Taurine import ATP-binding protein TauB of Pseudomonas savastanoi pv. phaseolicola (strain 1448A / Race 6) (Pseudomonas syringae pv. phaseolicola (strain 1448A / Race 6)).